A 391-amino-acid polypeptide reads, in one-letter code: Erythronate-4-phosphate dehydrogenase (391 aa).

Ser45 and Thr67 together coordinate substrate. Residues Asp147 and Thr176 each coordinate NAD(+). Residue Arg209 is part of the active site. Asp238 contacts NAD(+). Residue Glu243 is part of the active site. His260 (proton donor) is an active-site residue. Gly263 lines the NAD(+) pocket. Residue Tyr264 participates in substrate binding.

The protein belongs to the D-isomer specific 2-hydroxyacid dehydrogenase family. PdxB subfamily. In terms of assembly, homodimer.

It is found in the cytoplasm. The catalysed reaction is 4-phospho-D-erythronate + NAD(+) = (R)-3-hydroxy-2-oxo-4-phosphooxybutanoate + NADH + H(+). It participates in cofactor biosynthesis; pyridoxine 5'-phosphate biosynthesis; pyridoxine 5'-phosphate from D-erythrose 4-phosphate: step 2/5. Functionally, catalyzes the oxidation of erythronate-4-phosphate to 3-hydroxy-2-oxo-4-phosphonooxybutanoate. In Photobacterium profundum (strain SS9), this protein is Erythronate-4-phosphate dehydrogenase.